Here is a 141-residue protein sequence, read N- to C-terminus: Protein E6 (141 aa).

2 zinc fingers span residues 27–64 and 101–137; these read CRFC…CSSC and CQYC…CRHC.

This sequence belongs to the papillomaviridae E6 protein family. As to quaternary structure, forms homodimers. Interacts with ubiquitin-protein ligase UBE3A/E6-AP; this interaction stimulates UBE3A ubiquitin activity. Interacts with host BAK1.

The protein resides in the host cytoplasm. The protein localises to the host nucleus. In terms of biological role, plays a major role in the induction and maintenance of cellular transformation. E6 associates with host UBE3A/E6-AP ubiquitin-protein ligase and modulates its activity. Protects host keratinocytes from apoptosis by mediating the degradation of host BAK1. May also inhibit host immune response. The protein is Protein E6 of Homo sapiens (Human).